A 568-amino-acid chain; its full sequence is 2-succinyl-5-enolpyruvyl-6-hydroxy-3-cyclohexene-1-carboxylate synthase (568 aa).

The protein belongs to the TPP enzyme family. MenD subfamily. As to quaternary structure, homodimer. Mg(2+) is required as a cofactor. The cofactor is Mn(2+). It depends on thiamine diphosphate as a cofactor.

It catalyses the reaction isochorismate + 2-oxoglutarate + H(+) = 5-enolpyruvoyl-6-hydroxy-2-succinyl-cyclohex-3-ene-1-carboxylate + CO2. It functions in the pathway quinol/quinone metabolism; 1,4-dihydroxy-2-naphthoate biosynthesis; 1,4-dihydroxy-2-naphthoate from chorismate: step 2/7. The protein operates within quinol/quinone metabolism; menaquinone biosynthesis. In terms of biological role, catalyzes the thiamine diphosphate-dependent decarboxylation of 2-oxoglutarate and the subsequent addition of the resulting succinic semialdehyde-thiamine pyrophosphate anion to isochorismate to yield 2-succinyl-5-enolpyruvyl-6-hydroxy-3-cyclohexene-1-carboxylate (SEPHCHC). The polypeptide is 2-succinyl-5-enolpyruvyl-6-hydroxy-3-cyclohexene-1-carboxylate synthase (Haemophilus influenzae (strain PittGG)).